Reading from the N-terminus, the 305-residue chain is GMP synthase [glutamine-hydrolyzing] subunit B (305 aa).

The GMPS ATP-PPase domain maps to 2–185 (VNVDEFIEEA…LDLEEIISER (184 aa)). 29-35 (SGGVDSS) is an ATP binding site.

Heterodimer composed of a glutamine amidotransferase subunit (A) and a GMP-binding subunit (B).

The enzyme catalyses XMP + L-glutamine + ATP + H2O = GMP + L-glutamate + AMP + diphosphate + 2 H(+). It functions in the pathway purine metabolism; GMP biosynthesis; GMP from XMP (L-Gln route): step 1/1. Functionally, catalyzes the synthesis of GMP from XMP. The protein is GMP synthase [glutamine-hydrolyzing] subunit B of Haloarcula marismortui (strain ATCC 43049 / DSM 3752 / JCM 8966 / VKM B-1809) (Halobacterium marismortui).